The chain runs to 139 residues: MKKSTLINSGISYLVATLGHTDEITICDAGLPIPDHVQRIDLALTHGVPSFLDTVRVILSESQIEGVIIAEEFSDVSPVLHEALLKELSKESEETGKSIEIKYVSHEAFKARTEQSRAVVRTGECTPYANVIFQAGVVF.

H20 acts as the Proton donor in catalysis. Residues D28, H106, and 128 to 130 (YAN) each bind substrate.

It belongs to the RbsD / FucU family. RbsD subfamily. In terms of assembly, homodecamer.

Its subcellular location is the cytoplasm. It carries out the reaction beta-D-ribopyranose = beta-D-ribofuranose. The protein operates within carbohydrate metabolism; D-ribose degradation; D-ribose 5-phosphate from beta-D-ribopyranose: step 1/2. Functionally, catalyzes the interconversion of beta-pyran and beta-furan forms of D-ribose. The polypeptide is D-ribose pyranase (Vibrio parahaemolyticus serotype O3:K6 (strain RIMD 2210633)).